We begin with the raw amino-acid sequence, 301 residues long: Ornithine carbamoyltransferase (301 aa).

Carbamoyl phosphate contacts are provided by residues 47-50, glutamine 74, arginine 98, and 125-128; these read STRT and HPCQ. Residues asparagine 156, aspartate 220, and 224 to 225 each bind L-ornithine; that span reads SM. Residues 260–261 and arginine 288 contribute to the carbamoyl phosphate site; that span reads CL.

This sequence belongs to the aspartate/ornithine carbamoyltransferase superfamily. OTCase family.

The protein resides in the cytoplasm. It catalyses the reaction carbamoyl phosphate + L-ornithine = L-citrulline + phosphate + H(+). Its pathway is amino-acid biosynthesis; L-arginine biosynthesis; L-arginine from L-ornithine and carbamoyl phosphate: step 1/3. Functionally, reversibly catalyzes the transfer of the carbamoyl group from carbamoyl phosphate (CP) to the N(epsilon) atom of ornithine (ORN) to produce L-citrulline. The polypeptide is Ornithine carbamoyltransferase (Methanobrevibacter smithii (strain ATCC 35061 / DSM 861 / OCM 144 / PS)).